The primary structure comprises 291 residues: Cell division control protein 2 homolog 1 (291 aa).

In terms of domain architecture, Protein kinase spans 1 to 284; that stretch reads GENVEKIGEG…ARSAVEHEYF (284 aa). ATP is bound by residues 7–15 and Lys-30; that span reads IGEGTYGVV. Phosphothreonine is present on Thr-11. Tyr-12 is subject to Phosphotyrosine. Asp-124 (proton acceptor) is an active-site residue. Thr-158 bears the Phosphothreonine; by CAK mark.

It belongs to the protein kinase superfamily. CMGC Ser/Thr protein kinase family. CDC2/CDKX subfamily. Found in most organs including root, young leaf, stem, vegetative meristem and flower bud.

The catalysed reaction is L-seryl-[protein] + ATP = O-phospho-L-seryl-[protein] + ADP + H(+). The enzyme catalyses L-threonyl-[protein] + ATP = O-phospho-L-threonyl-[protein] + ADP + H(+). It catalyses the reaction [DNA-directed RNA polymerase] + ATP = phospho-[DNA-directed RNA polymerase] + ADP + H(+). With respect to regulation, phosphorylation at Thr-11 or Tyr-12 inactivates the enzyme, while phosphorylation at Thr-158 activates it. Plays a key role in the control of the eukaryotic cell cycle. Component of the kinase complex that phosphorylates the repetitive C-terminus of RNA polymerase II. This chain is Cell division control protein 2 homolog 1 (CDC2A), found in Medicago sativa (Alfalfa).